The following is a 343-amino-acid chain: L-threonine 3-dehydrogenase (343 aa).

Cys38 lines the Zn(2+) pocket. Catalysis depends on charge relay system residues Thr40 and His43. Residues His63, Glu64, Cys93, Cys96, Cys99, and Cys107 each coordinate Zn(2+). Residues Ile175, Asp195, Arg200, 262–264 (LGI), and 286–287 (IY) each bind NAD(+).

This sequence belongs to the zinc-containing alcohol dehydrogenase family. As to quaternary structure, homotetramer. Zn(2+) is required as a cofactor.

It is found in the cytoplasm. It catalyses the reaction L-threonine + NAD(+) = (2S)-2-amino-3-oxobutanoate + NADH + H(+). It functions in the pathway amino-acid degradation; L-threonine degradation via oxydo-reductase pathway; glycine from L-threonine: step 1/2. Catalyzes the NAD(+)-dependent oxidation of L-threonine to 2-amino-3-ketobutyrate. This chain is L-threonine 3-dehydrogenase, found in Pectobacterium carotovorum subsp. carotovorum (strain PC1).